The chain runs to 152 residues: MKTFSATPADIDKKWIIIDAEGVVLGRLASIVATRLRGKHKPSFTPHMDMGDNVIVINAEKIQMTGKKREENFYWHTGHPGGIKSRTKQQILEGAHPERVVMQAVKRMLPGNRLSRQQMTNLRIYAGAEHPHEAQSPEVLDVKSMNKKNTRS.

The segment at 129-152 is disordered; it reads EHPHEAQSPEVLDVKSMNKKNTRS.

This sequence belongs to the universal ribosomal protein uL13 family. Part of the 50S ribosomal subunit.

In terms of biological role, this protein is one of the early assembly proteins of the 50S ribosomal subunit, although it is not seen to bind rRNA by itself. It is important during the early stages of 50S assembly. The polypeptide is Large ribosomal subunit protein uL13 (Ruegeria sp. (strain TM1040) (Silicibacter sp.)).